The sequence spans 292 residues: 4-hydroxy-tetrahydrodipicolinate synthase (292 aa).

Pyruvate is bound at residue threonine 45. Tyrosine 133 (proton donor/acceptor) is an active-site residue. Lysine 161 acts as the Schiff-base intermediate with substrate in catalysis. Residue isoleucine 203 coordinates pyruvate.

It belongs to the DapA family. As to quaternary structure, homotetramer; dimer of dimers.

It is found in the cytoplasm. It catalyses the reaction L-aspartate 4-semialdehyde + pyruvate = (2S,4S)-4-hydroxy-2,3,4,5-tetrahydrodipicolinate + H2O + H(+). It functions in the pathway amino-acid biosynthesis; L-lysine biosynthesis via DAP pathway; (S)-tetrahydrodipicolinate from L-aspartate: step 3/4. In terms of biological role, catalyzes the condensation of (S)-aspartate-beta-semialdehyde [(S)-ASA] and pyruvate to 4-hydroxy-tetrahydrodipicolinate (HTPA). This chain is 4-hydroxy-tetrahydrodipicolinate synthase, found in Shigella boydii serotype 18 (strain CDC 3083-94 / BS512).